The primary structure comprises 333 residues: Putative ketol-acid reductoisomerase 2 (333 aa).

A KARI N-terminal Rossmann domain is found at 1–182 (MDKTVLDANL…AIPGGIAVIS (182 aa)). The KARI C-terminal knotted domain maps to 183–329 (SFEEEALLDL…KELYKLLGRK (147 aa)).

Belongs to the ketol-acid reductoisomerase family.

The catalysed reaction is (2R)-2,3-dihydroxy-3-methylbutanoate + NADP(+) = (2S)-2-acetolactate + NADPH + H(+). It carries out the reaction (2R,3R)-2,3-dihydroxy-3-methylpentanoate + NADP(+) = (S)-2-ethyl-2-hydroxy-3-oxobutanoate + NADPH + H(+). It functions in the pathway amino-acid biosynthesis; L-isoleucine biosynthesis; L-isoleucine from 2-oxobutanoate: step 2/4. Its pathway is amino-acid biosynthesis; L-valine biosynthesis; L-valine from pyruvate: step 2/4. This is Putative ketol-acid reductoisomerase 2 (ilvC2) from Saccharolobus solfataricus (strain ATCC 35092 / DSM 1617 / JCM 11322 / P2) (Sulfolobus solfataricus).